The following is a 174-amino-acid chain: Non-classical export protein 2 homolog 1 (174 aa).

Residues 1 to 7 (MLSAADN) lie on the Cytoplasmic side of the membrane. A helical transmembrane segment spans residues 8-28 (LVRIINAVFLIISIGLISGLI). Topologically, residues 29 to 41 (GTQTKHSSRVNFC) are extracellular. The chain crosses the membrane as a helical span at residues 42 to 62 (MFAAVYGLVTDSLYGFLANFW). Topologically, residues 63-69 (TSLTYPA) are cytoplasmic. Residues 70–90 (ILLVLDFLNFIFTFVAATALA) traverse the membrane as a helical segment. The Extracellular portion of the chain corresponds to 91 to 122 (VGIRCHSCKNKTYLEQNKIIQGSSSRCHQSQA). Residues 123 to 143 (AVAFFYFSCFLFLIKVTVATM) traverse the membrane as a helical segment. Topologically, residues 144–174 (GMMQNGGFGSNTGFSRRRARRQMGIPTISQV) are cytoplasmic.

Belongs to the NCE102 family.

Its subcellular location is the cell membrane. Its function is as follows. Involved in membrane organization. Required for the formation of membrane compartments of CAN1 (MCCs), localization of CAN1 at the MCCs and subsequent invagination of the plasma membrane at the MCCs sites. Involved in eisosome organization and might act as a sensor of sphingolipids that regulates plasma membrane function. Involved in a novel pathway of export of proteins that lack a cleavable signal sequence. Non-classical export pathway also functions as an alternative clearance/detoxification pathway to eliminate damaged material, when the basic repair pathway is not sufficient. This is Non-classical export protein 2 homolog 1 (FHN1) from Saccharomyces cerevisiae (strain ATCC 204508 / S288c) (Baker's yeast).